Here is a 360-residue protein sequence, read N- to C-terminus: Photosystem II protein D1 3 (360 aa).

3 consecutive transmembrane segments (helical) span residues 29–46 (YVGW…TAAI), 118–133 (HFLI…QWEL), and 142–156 (WIPV…AATA). Position 118 (His-118) interacts with chlorophyll a. Tyr-126 lines the pheophytin a pocket. Residues Asp-170 and Glu-189 each contribute to the [CaMn4O5] cluster site. The chain crosses the membrane as a helical span at residues 197–218 (FHMIGVAGVFGGALFSAMHGSL). His-198 lines the chlorophyll a pocket. A quinone contacts are provided by residues His-215 and 264-265 (SF). Position 215 (His-215) interacts with Fe cation. Residue His-272 coordinates Fe cation. A helical transmembrane segment spans residues 274 to 288 (FLAAWPVIGIWFAAL). [CaMn4O5] cluster contacts are provided by His-332, Glu-333, Asp-342, and Ala-344. Residues 345–360 (SGEVQPIALTAPAIAS) constitute a propeptide that is removed on maturation.

The protein belongs to the reaction center PufL/M/PsbA/D family. As to quaternary structure, PSII is composed of 1 copy each of membrane proteins PsbA, PsbB, PsbC, PsbD, PsbE, PsbF, PsbH, PsbI, PsbJ, PsbK, PsbL, PsbM, PsbT, PsbX, PsbY, PsbZ, Psb30/Ycf12, peripheral proteins PsbO, CyanoQ (PsbQ), PsbU, PsbV and a large number of cofactors. It forms dimeric complexes. The cofactor is The D1/D2 heterodimer binds P680, chlorophylls that are the primary electron donor of PSII, and subsequent electron acceptors. It shares a non-heme iron and each subunit binds pheophytin, quinone, additional chlorophylls, carotenoids and lipids. D1 provides most of the ligands for the Mn4-Ca-O5 cluster of the oxygen-evolving complex (OEC). There is also a Cl(-1) ion associated with D1 and D2, which is required for oxygen evolution. The PSII complex binds additional chlorophylls, carotenoids and specific lipids.. Tyr-161 forms a radical intermediate that is referred to as redox-active TyrZ, YZ or Y-Z. Post-translationally, C-terminally processed by CtpA; processing is essential to allow assembly of the oxygen-evolving complex and thus photosynthetic growth.

It is found in the cellular thylakoid membrane. The catalysed reaction is 2 a plastoquinone + 4 hnu + 2 H2O = 2 a plastoquinol + O2. Its function is as follows. Photosystem II (PSII) is a light-driven water:plastoquinone oxidoreductase that uses light energy to abstract electrons from H(2)O, generating O(2) and a proton gradient subsequently used for ATP formation. It consists of a core antenna complex that captures photons, and an electron transfer chain that converts photonic excitation into a charge separation. The D1/D2 (PsbA/PsbD) reaction center heterodimer binds P680, the primary electron donor of PSII as well as several subsequent electron acceptors. The polypeptide is Photosystem II protein D1 3 (Nostoc sp. (strain PCC 7120 / SAG 25.82 / UTEX 2576)).